The sequence spans 258 residues: tRNA pseudouridine synthase A (258 aa).

The active-site Nucleophile is aspartate 52. Position 110 (tyrosine 110) interacts with substrate.

Belongs to the tRNA pseudouridine synthase TruA family. Homodimer.

It carries out the reaction uridine(38/39/40) in tRNA = pseudouridine(38/39/40) in tRNA. In terms of biological role, formation of pseudouridine at positions 38, 39 and 40 in the anticodon stem and loop of transfer RNAs. This chain is tRNA pseudouridine synthase A, found in Francisella tularensis subsp. holarctica (strain LVS).